The chain runs to 638 residues: Threonine--tRNA ligase (638 aa).

The 62-residue stretch at 1 to 62 folds into the TGS domain; sequence MYQLTLPDKS…EKNSNIEVLT (62 aa). Residues 246-537 form a catalytic region; the sequence is DHRKIGKEMD…LIEHYEGKFP (292 aa). Cys-337, His-388, and His-514 together coordinate Zn(2+).

Belongs to the class-II aminoacyl-tRNA synthetase family. Homodimer. Requires Zn(2+) as cofactor.

Its subcellular location is the cytoplasm. The enzyme catalyses tRNA(Thr) + L-threonine + ATP = L-threonyl-tRNA(Thr) + AMP + diphosphate + H(+). Its function is as follows. Catalyzes the attachment of threonine to tRNA(Thr) in a two-step reaction: L-threonine is first activated by ATP to form Thr-AMP and then transferred to the acceptor end of tRNA(Thr). Also edits incorrectly charged L-seryl-tRNA(Thr). This chain is Threonine--tRNA ligase, found in Leptospira interrogans serogroup Icterohaemorrhagiae serovar copenhageni (strain Fiocruz L1-130).